A 377-amino-acid chain; its full sequence is Nitric oxide reductase FlRd-NAD(+) reductase (377 aa).

The protein belongs to the FAD-dependent oxidoreductase family. FAD is required as a cofactor.

It localises to the cytoplasm. The enzyme catalyses 2 reduced [nitric oxide reductase rubredoxin domain] + NAD(+) + H(+) = 2 oxidized [nitric oxide reductase rubredoxin domain] + NADH. It participates in nitrogen metabolism; nitric oxide reduction. In terms of biological role, one of at least two accessory proteins for anaerobic nitric oxide (NO) reductase. Reduces the rubredoxin moiety of NO reductase. The protein is Nitric oxide reductase FlRd-NAD(+) reductase of Shigella boydii serotype 18 (strain CDC 3083-94 / BS512).